Reading from the N-terminus, the 587-residue chain is Pectinesterase 2 (587 aa).

Residues 1 to 40 (MAPIKEFISKFSDFKNNKKLILSSAAIALLLLASIVGIAA) form the signal peptide. N-linked (GlcNAc...) asparagine glycosylation is found at asparagine 99 and asparagine 218. Residues threonine 351 and glutamine 381 each coordinate substrate. Catalysis depends on aspartate 404, which acts as the Proton donor. A disulfide bridge links cysteine 418 with cysteine 438. Aspartate 425 functions as the Nucleophile in the catalytic mechanism. Arginine 493 and tryptophan 495 together coordinate substrate.

This sequence in the N-terminal section; belongs to the PMEI family. It in the C-terminal section; belongs to the pectinesterase family. As to expression, expressed in flower buds.

It localises to the secreted. The protein localises to the cell wall. It catalyses the reaction [(1-&gt;4)-alpha-D-galacturonosyl methyl ester](n) + n H2O = [(1-&gt;4)-alpha-D-galacturonosyl](n) + n methanol + n H(+). The protein operates within glycan metabolism; pectin degradation; 2-dehydro-3-deoxy-D-gluconate from pectin: step 1/5. Acts in the modification of cell walls via demethylesterification of cell wall pectin. This chain is Pectinesterase 2 (PME2), found in Arabidopsis thaliana (Mouse-ear cress).